The sequence spans 267 residues: DNA repair protein RecO (267 aa).

The protein belongs to the RecO family.

Its function is as follows. Involved in DNA repair and RecF pathway recombination. This chain is DNA repair protein RecO, found in Prochlorococcus marinus (strain MIT 9313).